Reading from the N-terminus, the 395-residue chain is Elongation factor Tu (395 aa).

The 196-residue stretch at 10 to 205 (KPHVNIGTIG…AVDSYIPMPE (196 aa)) folds into the tr-type G domain. The tract at residues 19–26 (GHIDHGKT) is G1. 19-26 (GHIDHGKT) contributes to the GTP binding site. T26 is a binding site for Mg(2+). The tract at residues 61–65 (GITIA) is G2. The interval 82-85 (DCPG) is G3. GTP is bound by residues 82 to 86 (DCPGH) and 137 to 140 (NKVD). Positions 137 to 140 (NKVD) are G4. Residues 175–177 (SAL) are G5.

It belongs to the TRAFAC class translation factor GTPase superfamily. Classic translation factor GTPase family. EF-Tu/EF-1A subfamily. In terms of assembly, monomer.

The protein localises to the cytoplasm. The enzyme catalyses GTP + H2O = GDP + phosphate + H(+). Its function is as follows. GTP hydrolase that promotes the GTP-dependent binding of aminoacyl-tRNA to the A-site of ribosomes during protein biosynthesis. The chain is Elongation factor Tu from Solibacter usitatus (strain Ellin6076).